The following is a 326-amino-acid chain: Holliday junction branch migration complex subunit RuvB (326 aa).

The segment at 1–180 (MRSISCSKEY…FGIPLRLEFY (180 aa)) is large ATPase domain (RuvB-L). ATP-binding positions include I19, R20, G61, K64, T65, T66, 127–129 (EDF), R170, Y180, and R217. T65 is a binding site for Mg(2+). The segment at 181–251 (SFEELVDIIK…IADSALSKLG (71 aa)) is small ATPAse domain (RuvB-S). The head domain (RuvB-H) stretch occupies residues 254 to 326 (KMGLNKLDVD…QGKEYLSLQY (73 aa)). 2 residues coordinate DNA: R307 and R312.

Belongs to the RuvB family. In terms of assembly, homohexamer. Forms an RuvA(8)-RuvB(12)-Holliday junction (HJ) complex. HJ DNA is sandwiched between 2 RuvA tetramers; dsDNA enters through RuvA and exits via RuvB. An RuvB hexamer assembles on each DNA strand where it exits the tetramer. Each RuvB hexamer is contacted by two RuvA subunits (via domain III) on 2 adjacent RuvB subunits; this complex drives branch migration. In the full resolvosome a probable DNA-RuvA(4)-RuvB(12)-RuvC(2) complex forms which resolves the HJ.

It is found in the cytoplasm. The catalysed reaction is ATP + H2O = ADP + phosphate + H(+). Its function is as follows. The RuvA-RuvB-RuvC complex processes Holliday junction (HJ) DNA during genetic recombination and DNA repair, while the RuvA-RuvB complex plays an important role in the rescue of blocked DNA replication forks via replication fork reversal (RFR). RuvA specifically binds to HJ cruciform DNA, conferring on it an open structure. The RuvB hexamer acts as an ATP-dependent pump, pulling dsDNA into and through the RuvAB complex. RuvB forms 2 homohexamers on either side of HJ DNA bound by 1 or 2 RuvA tetramers; 4 subunits per hexamer contact DNA at a time. Coordinated motions by a converter formed by DNA-disengaged RuvB subunits stimulates ATP hydrolysis and nucleotide exchange. Immobilization of the converter enables RuvB to convert the ATP-contained energy into a lever motion, pulling 2 nucleotides of DNA out of the RuvA tetramer per ATP hydrolyzed, thus driving DNA branch migration. The RuvB motors rotate together with the DNA substrate, which together with the progressing nucleotide cycle form the mechanistic basis for DNA recombination by continuous HJ branch migration. Branch migration allows RuvC to scan DNA until it finds its consensus sequence, where it cleaves and resolves cruciform DNA. This chain is Holliday junction branch migration complex subunit RuvB, found in Wolbachia sp. subsp. Brugia malayi (strain TRS).